An 889-amino-acid chain; its full sequence is F-BAR domain only protein 1 (889 aa).

Residues 1 to 248 (MSYFGEHFWG…NIENVSVEML (248 aa)) form the F-BAR domain. Residues 1–275 (MSYFGEHFWG…LDFEAYSAAA (275 aa)) are mediates membrane-binding. Residues 156–195 (TSQKEMDKAETKTKKAAESLRRSVEKYNSARADFEQKMLD) adopt a coiled-coil conformation. Residues 267 to 442 (DFEAYSAAAL…KNLFGPPLES (176 aa)) form a mediates interaction with the adaptor protein complex AP-2 region. The tract at residues 294–352 (LSRREREPEPPAAVDFLEPDSGTCPEVDEEGFTVRPDVTQNSTAEPSRFSSSDSDFDDE) is disordered. Residues S295, S347, and S372 each carry the phosphoserine modification. Positions 382–596 (ATAGSLILPP…SPLGSSAAST (215 aa)) are disordered. The span at 450–469 (TGSSSLGFTSSPSPFSSSSP) shows a compositional bias: low complexity. The segment covering 496-511 (PGTPQSPPSCRAPPPE) has biased composition (pro residues). S530 carries the post-translational modification Phosphoserine. A compositionally biased stretch (low complexity) spans 580–596 (LSRSLSPSPLGSSAAST). The interval 609-889 (HGVSRGPSPV…FATGMYLVSC (281 aa)) is mediates interaction with AGFG1, CALM, DAB2, EPS15, EPS15R, ITSN1 and clathrin. S616 is modified (phosphoserine). Residues 625–888 (ALPIATAFTE…RFATGMYLVS (264 aa)) enclose the MHD domain. Positions 826 to 849 (AGGSGRLSASWEPLSGPSTPSPVA) are disordered.

Belongs to the FCHO family. As to quaternary structure, may oligomerize and form homotetramer. Interacts with AP2A2 and AP2B1; 2 subunits of the adaptor protein complex AP-2. Interacts with DAB2. Interacts with clathrin (CLTC or CLTCL1). Interacts with EPS15, EPS15R and ITSN1. Interacts with AGFG1 and CALM. May interact with ACVR1; linking this receptor to clathrin-mediated endocytosis. As to expression, predominantly expressed in lymphoid cells.

It localises to the membrane. It is found in the clathrin-coated pit. Functions in an early step of clathrin-mediated endocytosis. Has both a membrane binding/bending activity and the ability to recruit proteins essential to the formation of functional clathrin-coated pits. May regulate Bmp signaling by regulating clathrin-mediated endocytosis of Bmp receptors. Involved in the regulation of T-cell poliferation and activation. Affects TCR clustering upon receptor triggering and modulates its internalisation, playing a role in TCR-dependent T-cell activation. This is F-BAR domain only protein 1 from Homo sapiens (Human).